The primary structure comprises 488 residues: Cobyric acid synthase (488 aa).

Residues 248-441 (VLRVVVPALP…VHGLFDAPDA (194 aa)) form the GATase cobBQ-type domain. The active-site Nucleophile is C328. Residue H433 is part of the active site.

Belongs to the CobB/CobQ family. CobQ subfamily.

It participates in cofactor biosynthesis; adenosylcobalamin biosynthesis. In terms of biological role, catalyzes amidations at positions B, D, E, and G on adenosylcobyrinic A,C-diamide. NH(2) groups are provided by glutamine, and one molecule of ATP is hydrogenolyzed for each amidation. The protein is Cobyric acid synthase of Burkholderia ambifaria (strain ATCC BAA-244 / DSM 16087 / CCUG 44356 / LMG 19182 / AMMD) (Burkholderia cepacia (strain AMMD)).